The sequence spans 147 residues: Transcriptional regulator MraZ (147 aa).

SpoVT-AbrB domains are found at residues 5 to 52 (SHAI…PETE) and 81 to 124 (ATTL…SEEA).

It belongs to the MraZ family. In terms of assembly, forms oligomers.

Its subcellular location is the cytoplasm. The protein resides in the nucleoid. The polypeptide is Transcriptional regulator MraZ (Saccharophagus degradans (strain 2-40 / ATCC 43961 / DSM 17024)).